Consider the following 547-residue polypeptide: NXPE family member 1 (547 aa).

Residues 1 to 21 (MSSNTMLQKTLLILISFSVVT) form the signal peptide. Asn-39 and Asn-211 each carry an N-linked (GlcNAc...) asparagine glycan.

Belongs to the NXPE family.

It is found in the secreted. This is NXPE family member 1 (NXPE1) from Homo sapiens (Human).